The primary structure comprises 185 residues: MSEHNPYGTMHATTIITVRKGGKVVMAGDGQVSLGQTVMKGNARKVRRLSKGDVIAGFAGATADAFTLLERLEVKLEQYPDQLMRAAVELAKDWRTNKYLRNLEAMMLVADRSVTLAITGNGDVLEPEHGTIAIGSGGNYAFAAARALMDTDRSAEEIARRALEIAGDICVYTNHNVVLETLDAE.

Residue Thr-13 is part of the active site. 3 residues coordinate Na(+): Gly-167, Cys-170, and Thr-173.

It belongs to the peptidase T1B family. HslV subfamily. As to quaternary structure, a double ring-shaped homohexamer of HslV is capped on each side by a ring-shaped HslU homohexamer. The assembly of the HslU/HslV complex is dependent on binding of ATP.

The protein localises to the cytoplasm. It catalyses the reaction ATP-dependent cleavage of peptide bonds with broad specificity.. Allosterically activated by HslU binding. Protease subunit of a proteasome-like degradation complex believed to be a general protein degrading machinery. The protein is ATP-dependent protease subunit HslV of Sinorhizobium medicae (strain WSM419) (Ensifer medicae).